A 106-amino-acid chain; its full sequence is Foxo1-corepressor (106 aa).

Residues 1–44 (MGGPTRRHQEEGSAECLGGPSTRAAPGPGLRDFHFTTAGPSKAD) form a disordered region. A Nuclear export signal motif is present at residues 78 to 87 (IGTLYIRLDL). T93 is modified (phosphothreonine; by PKA).

In terms of assembly, interacts with FOXO1 (via N-terminal domain); the interaction is direct, occurs in a forskolin-independent manner that prevents SIRT1 binding to FOXO1. Interacts with FOXO3. Does not interact with FOXO4. Phosphorylated at Thr-93 by PKA, leading to import into the nucleus. As to expression, expressed in adipocytes. Expressed in brown and white adipose tissue but not in liver. Protein levels in brown and white adipose tissues decrease following fasting (at protein level). Expressed in white and brown adipose tissues. Expressed in adipocytes. Not expressed in liver, skeletal muscle and brain.

It is found in the cytoplasm. Its subcellular location is the cytosol. The protein localises to the nucleus. In terms of biological role, regulator of adipocytes that acts by repressing FOXO1 transcriptional activity. Acts by promoting acetylation of FOXO1, both by preventing the interaction between FOXO1 and SIRT1 deacetylase, and by mediating acetyltransferase activity in vitro. Regulates insulin sensitivity and energy metabolism. The polypeptide is Foxo1-corepressor (Fcor) (Mus musculus (Mouse)).